The following is a 515-amino-acid chain: Probable cytosol aminopeptidase (515 aa).

Residues Lys-279 and Asp-284 each coordinate Mn(2+). Residue Lys-291 is part of the active site. Mn(2+)-binding residues include Asp-302, Asp-361, and Glu-363. The active site involves Arg-365.

Belongs to the peptidase M17 family. The cofactor is Mn(2+).

It localises to the cytoplasm. The enzyme catalyses Release of an N-terminal amino acid, Xaa-|-Yaa-, in which Xaa is preferably Leu, but may be other amino acids including Pro although not Arg or Lys, and Yaa may be Pro. Amino acid amides and methyl esters are also readily hydrolyzed, but rates on arylamides are exceedingly low.. It catalyses the reaction Release of an N-terminal amino acid, preferentially leucine, but not glutamic or aspartic acids.. In terms of biological role, presumably involved in the processing and regular turnover of intracellular proteins. Catalyzes the removal of unsubstituted N-terminal amino acids from various peptides. This Mycobacterium bovis (strain ATCC BAA-935 / AF2122/97) protein is Probable cytosol aminopeptidase.